Here is a 173-residue protein sequence, read N- to C-terminus: T-complex protein 1 subunit alpha (173 aa).

This sequence belongs to the TCP-1 chaperonin family. Component of the chaperonin-containing T-complex (TRiC), a heterooligomeric complex of about 850 to 900 kDa that forms two stacked rings, 12 to 16 nm in diameter.

It is found in the cytoplasm. Its subcellular location is the cytosol. In terms of biological role, component of the chaperonin-containing T-complex (TRiC), a molecular chaperone complex that assists the folding of proteins upon ATP hydrolysis. This is T-complex protein 1 subunit alpha from Ambystoma mexicanum (Axolotl).